The primary structure comprises 255 residues: tRNA (guanine-N(1)-)-methyltransferase (255 aa).

Residues G113 and 133 to 138 contribute to the S-adenosyl-L-methionine site; that span reads IGDYVL.

Belongs to the RNA methyltransferase TrmD family. As to quaternary structure, homodimer.

Its subcellular location is the cytoplasm. The catalysed reaction is guanosine(37) in tRNA + S-adenosyl-L-methionine = N(1)-methylguanosine(37) in tRNA + S-adenosyl-L-homocysteine + H(+). Specifically methylates guanosine-37 in various tRNAs. This Chloroflexus aggregans (strain MD-66 / DSM 9485) protein is tRNA (guanine-N(1)-)-methyltransferase.